Reading from the N-terminus, the 1233-residue chain is Structural maintenance of chromosomes protein 1A (1233 aa).

32 to 39 (GPNGSGKS) lines the ATP pocket. Coiled coils occupy residues 104–124 (EYKI…LEKL) and 163–503 (ELAQ…KAEI). A compositionally biased stretch (basic and acidic residues) spans 284-293 (IKEKDSELNQ). Disordered stretches follow at residues 284–308 (IKEK…TSHK) and 348–369 (QEFE…TLEE). Residues Ser358 and Ser360 each carry the phosphoserine modification. An SMC hinge domain is found at 515-629 (VYGRLIDLCQ…DNVEDARRIA (115 aa)). Lys648 and Lys713 each carry N6-acetyllysine. Positions 660 to 935 (KAKARRWDEK…RHNLLQACKM (276 aa)) form a coiled coil. Residues 947 to 968 (MDDISQEEGSSQGEDSVSGSQR) form a disordered region. Low complexity predominate over residues 953 to 967 (EEGSSQGEDSVSGSQ). A phosphoserine mark is found at Ser957, Ser962, Ser966, and Ser970. Residues 991–1068 (KDAQAEEEIK…FEQIKKERFD (78 aa)) are a coiled coil. An N6-acetyllysine modification is found at Lys1037.

It belongs to the SMC family. SMC1 subfamily. In terms of assembly, forms a heterodimer with SMC3 in cohesin complexes. Cohesin complexes are composed of the SMC1 (SMC1A or meiosis-specific SMC1B) and SMC3 heterodimer attached via their SMC hinge domain, RAD21 which link them, and one STAG protein (STAG1, STAG2 or meiosis-specific STAG3), which interacts with RAD21. In germ cell cohesin complexes, SMC1A is mutually exclusive with SMC1B. Found in a complex with CDCA5, SMC3 and RAD21, PDS5A/SCC-112 and PDS5B/APRIN. Interacts with NDC80, SYCP2, STAG3, BRCA1 and BRAT1. The cohesin complex interacts with the cohesin loading complex subunits NIPBL/Scc2 (via HEAT repeats) and MAU2/Scc4. NIPBL directly contacts all members of the complex, RAD21, SMC1A/B, SMC3 and STAG1. Interacts with RPGR. Found in a complex containing POLE and SMC3. Phosphorylated upon ionizing radiation or DNA methylation. Phosphorylation of Ser-957 and Ser-966 activates it and is required for S-phase checkpoint activation. Post-translationally, ubiquitinated by the DCX(DCAF15) complex, leading to its degradation.

Its subcellular location is the nucleus. The protein localises to the chromosome. It localises to the centromere. In terms of biological role, involved in chromosome cohesion during cell cycle and in DNA repair. Involved in DNA repair via its interaction with BRCA1 and its related phosphorylation by ATM, and works as a downstream effector in the ATM/NBS1 branch of S-phase checkpoint. Central component of cohesin complex. The cohesin complex is required for the cohesion of sister chromatids after DNA replication. The cohesin complex apparently forms a large proteinaceous ring within which sister chromatids can be trapped. At anaphase, the complex is cleaved and dissociates from chromatin, allowing sister chromatids to segregate. The cohesin complex may also play a role in spindle pole assembly during mitosis. Involved in DNA repair via its interaction with BRCA1 and its related phosphorylation by ATM, or via its phosphorylation by ATR. Works as a downstream effector both in the ATM/NBS1 branch and in the ATR/MSH2 branch of S-phase checkpoint. This Bos taurus (Bovine) protein is Structural maintenance of chromosomes protein 1A (SMC1A).